The chain runs to 379 residues: Origin of replication complex subunit 2 (379 aa).

The interval 1–25 is disordered; sequence MALRGGHAAAAAGVSSGSEDDDEEA. The span at 8-17 shows a compositional bias: low complexity; sequence AAAAAGVSSG.

This sequence belongs to the ORC2 family. In terms of assembly, component of the origin recognition complex (ORC) composed of at least ORC1, ORC2, ORC3, ORC4, ORC5 and ORC6. ORC is regulated in a cell-cycle and development dependent manner. It is sequentially assembled at the exit from anaphase of mitosis and disassembled as cells enter S phase.

Its subcellular location is the nucleus. Its function is as follows. Essential protein. Component of the origin recognition complex (ORC) that binds origins of replication. DNA-binding is ATP-dependent, however specific DNA sequences that define origins of replication have not been identified so far. ORC is required to assemble the pre-replication complex necessary to initiate DNA replication. This chain is Origin of replication complex subunit 2, found in Oryza sativa subsp. indica (Rice).